The sequence spans 143 residues: Heat shock protein Hsp-16.48/Hsp-16.49 (143 aa).

The 106-residue stretch at 35-140 (HNSFNFSDNI…SSRSIPINFV (106 aa)) folds into the sHSP domain.

It belongs to the small heat shock protein (HSP20) family.

This chain is Heat shock protein Hsp-16.48/Hsp-16.49 (hsp-16.48), found in Caenorhabditis elegans.